A 383-amino-acid chain; its full sequence is TnpB-like protein ORF383B (383 aa).

Residues cysteine 328, cysteine 331, cysteine 345, and cysteine 348 each contribute to the Zn(2+) site.

It in the N-terminal section; belongs to the transposase 2 family. In the C-terminal section; belongs to the transposase 35 family.

The sequence is that of TnpB-like protein ORF383B from Acidianus convivator (ATV).